The primary structure comprises 391 residues: Curcumin synthase 2 (391 aa).

Residue Cys166 is part of the active site.

Belongs to the thiolase-like superfamily. Chalcone/stilbene synthases family. As to quaternary structure, homodimer.

The enzyme catalyses (E)-feruloylacetyl-CoA + (E)-feruloyl-CoA + H2O = curcumin + CO2 + 2 CoA. The protein operates within secondary metabolite biosynthesis; flavonoid biosynthesis. Catalyzes the synthesis of curcumin by condensing feruloyl-CoA with a diketide-CoA in the curcuminoid biosynthesis. The protein is Curcumin synthase 2 (CURS2) of Curcuma longa (Turmeric).